We begin with the raw amino-acid sequence, 255 residues long: Hydroxyacylglutathione hydrolase (255 aa).

His-56, His-58, Asp-60, His-61, His-114, Asp-133, and His-171 together coordinate Zn(2+).

The protein belongs to the metallo-beta-lactamase superfamily. Glyoxalase II family. As to quaternary structure, monomer. The cofactor is Zn(2+).

It carries out the reaction an S-(2-hydroxyacyl)glutathione + H2O = a 2-hydroxy carboxylate + glutathione + H(+). It functions in the pathway secondary metabolite metabolism; methylglyoxal degradation; (R)-lactate from methylglyoxal: step 2/2. Thiolesterase that catalyzes the hydrolysis of S-D-lactoyl-glutathione to form glutathione and D-lactic acid. The chain is Hydroxyacylglutathione hydrolase from Rhodopseudomonas palustris (strain ATCC BAA-98 / CGA009).